The primary structure comprises 421 residues: MDLENKVKKMGLGHEQGFGAPCLKCKEKCEGFELHFWRKICRNCKCGQEEHDVLLSNEEDRKVGKLFEDTKYTTLIAKLKSDGIPMYKRNVMILTNPVAAKKNVSINTVTYEWAPPVHNQALARQYMQMLPKEKQPVAGSEGAQYRKKQLAKQLPAHDQDPSKCHELSPREVKEMEQFVKKYKSEALGVGDVKLPCEMDAQGPKQMYIPGGDRSTPPAAGAMEDKSAEHKSTQYSCYCCKLSMKEGDPAIYAERAGYDKLWHPACFVCSICHELLVDMIYFWKNEKLYCGRHYCDSEKPRCAGCDELIFSNEYTQAEKQSWHLKHFCCFACDGILAGDIYVMVNDKPVCKPCYVKNHAVVCQGCHNAIDPEVQRVTYNNFSWHASTECFLCSCCSKCLIGQKFMPVEGMVFCSVECKKMMS.

Residues Met-92 to Asp-199 form the PET domain. The interval Glu-133–Cys-164 is disordered. Residues Pro-155–Cys-164 are compositionally biased toward basic and acidic residues. 3 consecutive LIM zinc-binding domains span residues Tyr-234–Glu-297, Pro-299–Val-359, and Gln-362–Ser-421.

Belongs to the prickle / espinas / testin family. In terms of assembly, interacts via LIM domain 1 with ZYX. Interacts (via LIM domain 3) with ENAH and VASP. Interacts with ALKBH4, talin, actin, alpha-actinin, GRIP1 and PXN. Interacts (via LIM domain 2) with ACTL7A (via N-terminus). Heterodimer with ACTL7A; the heterodimer interacts with ENAH to form a heterotrimer.

It localises to the cytoplasm. Its subcellular location is the cell junction. The protein localises to the focal adhesion. Functionally, scaffold protein that may play a role in cell adhesion, cell spreading and in the reorganization of the actin cytoskeleton. Plays a role in the regulation of cell proliferation. May act as a tumor suppressor. The chain is Testin (TES) from Callithrix jacchus (White-tufted-ear marmoset).